A 406-amino-acid chain; its full sequence is DAZ-associated protein 1 (406 aa).

At methionine 1 the chain carries N-acetylmethionine. 2 RRM domains span residues 10-97 (GKLF…RTRP) and 113-190 (NKIF…RAEP). Residues 74 to 117 (TLDGRNIDPKPCTPRGMQPERTRPKEGWQKGPRSDSSKSNKIFV) are disordered. Residues 91-111 (QPERTRPKEGWQKGPRSDSSK) are compositionally biased toward basic and acidic residues. Lysine 150 carries the post-translational modification N6-acetyllysine. The interval 186–406 (KRAEPRDSKN…NVQGFHPYRR (221 aa)) is disordered. A compositionally biased stretch (polar residues) spans 195 to 207 (NQAPGQPGASQWG). The span at 247–262 (GPPPAGRGAPPPPPPF) shows a compositional bias: pro residues. Arginine 253 bears the Omega-N-methylarginine mark. The segment covering 280–294 (FPQGYGAPPQFSFGY) has biased composition (low complexity). The segment covering 295-315 (GPPPPPPDQFAPPGVPPPPAT) has biased composition (pro residues). The span at 363–378 (SDPSQQPPSYGGPSVP) shows a compositional bias: low complexity. Residues 379-392 (GSGGPPAGGSGFGR) show a composition bias toward gly residues.

As to quaternary structure, interacts with DAZ and DAZL. Acetylation at Lys-150 is predominantly observed in the nuclear fraction, and may regulate nucleocytoplasmic transport. Mainly expressed in testis. Expressed at much lower level in liver, heart and brain. Also expressed in ovary. Expressed throughout testes development, in both the prenatal and postnatal periods.

The protein resides in the cytoplasm. Its subcellular location is the nucleus. In terms of biological role, RNA-binding protein, which may be required during spermatogenesis. The chain is DAZ-associated protein 1 (Dazap1) from Mus musculus (Mouse).